Here is a 527-residue protein sequence, read N- to C-terminus: Tyrosine--tRNA ligase, cytoplasmic (527 aa).

Residue Tyr-39 coordinates L-tyrosine. The 'HIGH' region motif lies at 44-52 (TTGKPHVAY). L-tyrosine is bound by residues Tyr-166, Gln-170, Asp-173, and Gln-188. The 'KMSKS' region motif lies at 222–226 (KMSSS). The short motif at 242–247 (KKKLKK) is the Nuclear localization signal element. The disordered stretch occupies residues 337-362 (TNAAYPNPSKAKPAEKGTKNSEPETI). The segment covering 348-358 (KPAEKGTKNSE) has biased composition (basic and acidic residues). A tRNA-binding domain is found at 363–467 (VPSRLDIRVG…AECCAGERVY (105 aa)).

It belongs to the class-I aminoacyl-tRNA synthetase family. In terms of assembly, homodimer.

The protein localises to the cytoplasm. Its subcellular location is the nucleus. The catalysed reaction is tRNA(Tyr) + L-tyrosine + ATP = L-tyrosyl-tRNA(Tyr) + AMP + diphosphate + H(+). Its function is as follows. Catalyzes the attachment of tyrosine to tRNA(Tyr) in a two-step reaction: tyrosine is first activated by ATP to form Tyr-AMP and then transferred to the acceptor end of tRNA(Tyr). This chain is Tyrosine--tRNA ligase, cytoplasmic (YARS1), found in Gallus gallus (Chicken).